We begin with the raw amino-acid sequence, 262 residues long: DNA repair protein RecO (262 aa).

This sequence belongs to the RecO family.

In terms of biological role, involved in DNA repair and RecF pathway recombination. The sequence is that of DNA repair protein RecO from Enterococcus faecalis (strain ATCC 700802 / V583).